The chain runs to 317 residues: Fruit protein pKIWI502 (317 aa).

Positions 1–29 are disordered; that stretch reads MSITLSRPSLSRPSLSRHPSLTLHSSLSH. The FAD-binding FR-type domain maps to 71–182; it reads YIWTPVPISR…TQIIGRGFDI (112 aa).

This is Fruit protein pKIWI502 from Actinidia deliciosa (Kiwi).